The chain runs to 213 residues: Cell division protein SepF 2 (213 aa).

The interval 16 to 63 is disordered; it reads EDDGYDGRGFDPDDDFEPELDPEPERDRRRHEPPHQSHQALHPQRDES. A compositionally biased stretch (acidic residues) spans 27-39; it reads PDDDFEPELDPEP.

This sequence belongs to the SepF family. Homodimer. Interacts with FtsZ.

Its subcellular location is the cytoplasm. Its function is as follows. Cell division protein that is part of the divisome complex and is recruited early to the Z-ring. Probably stimulates Z-ring formation, perhaps through the cross-linking of FtsZ protofilaments. Its function overlaps with FtsA. In Streptomyces avermitilis (strain ATCC 31267 / DSM 46492 / JCM 5070 / NBRC 14893 / NCIMB 12804 / NRRL 8165 / MA-4680), this protein is Cell division protein SepF 2.